We begin with the raw amino-acid sequence, 352 residues long: Carbohydrate sulfotransferase 11 (352 aa).

Residues 1–16 (MKPALLEVMRMNRICR) lie on the Cytoplasmic side of the membrane. A helical; Signal-anchor for type II membrane protein transmembrane segment spans residues 17–37 (MVLATCFGSFILVIFYFQSML). Topologically, residues 38–352 (HPVMRRNPFG…YSVPNYLKLD (315 aa)) are lumenal. 3'-phosphoadenylyl sulfate is bound by residues 124–130 (PKVACTN) and 186–194 (REPFERLVS). Asn205, Asn223, Asn321, and Asn342 each carry an N-linked (GlcNAc...) asparagine glycan.

It belongs to the sulfotransferase 2 family. In terms of processing, N-glycosylated; required for activity and stability. As to expression, predominantly expressed in brain and kidney. Also expressed at weaker level in heart, spleen and lung. Expressed in developing chondrocytes.

Its subcellular location is the golgi apparatus membrane. The enzyme catalyses chondroitin beta-D-glucuronate + n 3'-phosphoadenylyl sulfate = chondroitin 4'-sulfate + n adenosine 3',5'-bisphosphate + n H(+). Its function is as follows. Catalyzes the transfer of sulfate to position 4 of the N-acetylgalactosamine (GalNAc) residue of chondroitin. Chondroitin sulfate constitutes the predominant proteoglycan present in cartilage and is distributed on the surfaces of many cells and extracellular matrices. Can also sulfate Gal residues in desulfated dermatan sulfate. Preferentially sulfates in GlcA-&gt;GalNAc unit than in IdoA-&gt;GalNAc unit. Does not form 4, 6-di-O-sulfated GalNAc when chondroitin sulfate C is used as an acceptor. The polypeptide is Carbohydrate sulfotransferase 11 (Chst11) (Mus musculus (Mouse)).